We begin with the raw amino-acid sequence, 356 residues long: Butyrate kinase (356 aa).

Belongs to the acetokinase family.

The protein resides in the cytoplasm. The enzyme catalyses butanoate + ATP = butanoyl phosphate + ADP. The protein operates within lipid metabolism; butanoate metabolism. Catalyzes the conversion of butyryl-CoA through butyryl phosphate to butyrate. The sequence is that of Butyrate kinase (buk) from Clostridium perfringens (strain 13 / Type A).